Reading from the N-terminus, the 472-residue chain is Pyruvate kinase (472 aa).

Residue Arg-33 participates in substrate binding. K(+) contacts are provided by Asn-35, Ser-37, and Asp-67. Residue 35–38 participates in ATP binding; the sequence is NFSH. Residues Arg-74 and Lys-155 each contribute to the ATP site. Residue Glu-220 participates in Mg(2+) binding. Positions 243, 244, and 276 each coordinate substrate. Asp-244 lines the Mg(2+) pocket.

Belongs to the pyruvate kinase family. Homotetramer. Mg(2+) serves as cofactor. K(+) is required as a cofactor.

It carries out the reaction pyruvate + ATP = phosphoenolpyruvate + ADP + H(+). It participates in carbohydrate degradation; glycolysis; pyruvate from D-glyceraldehyde 3-phosphate: step 5/5. The chain is Pyruvate kinase (pyk) from Mycobacterium intracellulare.